A 501-amino-acid polypeptide reads, in one-letter code: Ectoine/hydroxyectoine transporter (501 aa).

12 helical membrane passes run 9–29 (PVFY…ATLP), 45–65 (IHFG…LITL), 86–106 (FFTW…VFWG), 137–157 (AFFH…LVIA), 190–210 (LAVI…ILQM), 220–240 (VPTS…TYLI), 258–278 (LGSL…VFIL), 311–331 (WTIF…AFIA), 343–363 (VLGV…AFGG), 395–415 (LPMT…FLVT), 441–461 (IVWG…GGLE), and 465–485 (TASL…MASF).

It belongs to the BCCT transporter (TC 2.A.15) family.

Its subcellular location is the cell inner membrane. Its function is as follows. Mediates the import of ectoine and hydroxyectoine, which function as osmotic and cold stress protectants. Also has minor uptake activities for the compatible solutes proline and glycine betaine. The sequence is that of Ectoine/hydroxyectoine transporter from Virgibacillus pantothenticus.